Consider the following 309-residue polypeptide: Tagatose-6-phosphate kinase (309 aa).

It belongs to the carbohydrate kinase PfkB family. LacC subfamily.

It catalyses the reaction D-tagatofuranose 6-phosphate + ATP = D-tagatofuranose 1,6-bisphosphate + ADP + H(+). It participates in carbohydrate metabolism; D-tagatose 6-phosphate degradation; D-glyceraldehyde 3-phosphate and glycerone phosphate from D-tagatose 6-phosphate: step 1/2. The polypeptide is Tagatose-6-phosphate kinase (Streptococcus sanguinis (strain SK36)).